The following is a 482-amino-acid chain: G patch domain-containing protein 2-like (482 aa).

Residues Ser31, Ser86, and Ser88 each carry the phosphoserine modification. Phosphothreonine is present on Thr91. 2 disordered regions span residues 195 to 222 and 408 to 482; these read SQPG…SECD and KRKR…TNGC. Over residues 198 to 215 the composition is skewed to basic and acidic residues; that stretch reads GRKERMECEAEEQKHGSD. Residues 414–427 are compositionally biased toward low complexity; the sequence is VASASFSSPSPVHP. The span at 468-482 shows a compositional bias: polar residues; the sequence is EKNSGCSSSPGTNGC.

This chain is G patch domain-containing protein 2-like (Gpatch2l), found in Mus musculus (Mouse).